The chain runs to 289 residues: Putative transmembrane protein ORF111 (289 aa).

5 helical membrane-spanning segments follow: residues 1-21 (MIGPIVVLHLICAVGFSIFML), 112-132 (AIITIAIVGVVIGVFIIVCIA), 151-171 (IGITLFLLFLTLAGSVAFIVI), 189-209 (LNISWGFVCGILAISYSTSIL), and 261-281 (YLLTLCLLWWPAITIYFIGVG).

It is found in the host membrane. The protein is Putative transmembrane protein ORF111 of Ostreid herpesvirus 1 (isolate France) (OsHV-1).